A 467-amino-acid chain; its full sequence is ATP synthase subunit beta (467 aa).

150–157 (GGAGVGKT) contacts ATP.

It belongs to the ATPase alpha/beta chains family. As to quaternary structure, F-type ATPases have 2 components, CF(1) - the catalytic core - and CF(0) - the membrane proton channel. CF(1) has five subunits: alpha(3), beta(3), gamma(1), delta(1), epsilon(1). CF(0) has three main subunits: a(1), b(2) and c(9-12). The alpha and beta chains form an alternating ring which encloses part of the gamma chain. CF(1) is attached to CF(0) by a central stalk formed by the gamma and epsilon chains, while a peripheral stalk is formed by the delta and b chains.

Its subcellular location is the cell inner membrane. It catalyses the reaction ATP + H2O + 4 H(+)(in) = ADP + phosphate + 5 H(+)(out). Functionally, produces ATP from ADP in the presence of a proton gradient across the membrane. The catalytic sites are hosted primarily by the beta subunits. In Aliivibrio salmonicida (strain LFI1238) (Vibrio salmonicida (strain LFI1238)), this protein is ATP synthase subunit beta.